Here is a 935-residue protein sequence, read N- to C-terminus: MARWGAARMAACGPWGRNRRVGAGDAFEASEVRRDGRSRMMPACGPWGAGHGGGDPALERELSRDGSHYSISSAILPSLGARSNRRIKLRRFIISPYDRRYRIWETFLIVLVVYSAWVSPFEFGFIPKPTGALATADNVVNAFFAVDIILTFFVAYLDKMSYMLEDDPKKIAWRYSTTWLVLDVASTIPSEFARRILPSKLRSYGFFNMLRLWRLRRVSSLFSRLEKDRHFNYFWVRCAKLICVTLFAVHCAACFYYLLADRYPVPTSTWIGNYMADFHERSLWIRYVTSVYWSITTLTTVGYGDLHAENTREMIFNIFYMLFNLGLTAYLIGNMTNLVVHGTSRTRNYRDTIQAATSFGVRNQLPPRLQDQMISHISLKYRTDSEGLQQQEILDSLPKAIKSSISQYLFFHLVQNVYLFQGVSNDLIFQLVSEMKAEYFPPREDVILQNEAPTDFYILVSGSVELVEQQNGADQVIQVATSGEVVGEIGVLCYRPQLFTVRTRSLCQLLRLNRTAFLSIVQSNVGDGTIIMNNLIQFLKEQKENSVMAGVVKEIESMLARGNLDLPITLCFAVTRGDDFLLHQLLKRGMDPNESDNDGHTALHIAASKGNEQCVRLLLEYGADPNARDSEGKVPLWEALCEKHAAVVQLLVEGGADLSSGDTGLYACIAVEESDTELLNDIIHYGGDVNRARRDGTTALHRAVCDGNVQMAELLLEHGADIDKQDGNGWTPRALAEQQGHDDIQLLFRSRKAATASGHHHVPSSTTTRVAPAAAAASLIGRFNSEPMMKNMIHEDADLPSRVLPEKLRRKRVTFQNSLFGVISSSQAQRETDHPLSRGGLAATGSPNPSSGSRNAVIRVTISCPEKGNTAGKLVLLPQTLDMLLELGAKKFDFAPTKVLTVEGAEVDEVELIRDGDHLVLVSDEWDAEKMKGKS.

Residues 1-106 (MARWGAARMA…YDRRYRIWET (106 aa)) are Cytoplasmic-facing. Residues 107–127 (FLIVLVVYSAWVSPFEFGFIP) traverse the membrane as a helical segment. At 128 to 136 (KPTGALATA) the chain is on the extracellular side. A helical transmembrane segment spans residues 137–157 (DNVVNAFFAVDIILTFFVAYL). At 158–178 (DKMSYMLEDDPKKIAWRYSTT) the chain is on the cytoplasmic side. A helical membrane pass occupies residues 179–199 (WLVLDVASTIPSEFARRILPS). Residues 200 to 205 (KLRSYG) are Extracellular-facing. The helical; Voltage-sensor transmembrane segment at 206–226 (FFNMLRLWRLRRVSSLFSRLE) threads the bilayer. Over 227 to 240 (KDRHFNYFWVRCAK) the chain is Cytoplasmic. The chain crosses the membrane as a helical span at residues 241-261 (LICVTLFAVHCAACFYYLLAD). At 262–288 (RYPVPTSTWIGNYMADFHERSLWIRYV) the chain is on the extracellular side. Residues 289-308 (TSVYWSITTLTTVGYGDLHA) constitute an intramembrane region (pore-forming). The Extracellular portion of the chain corresponds to 309-312 (ENTR). A helical membrane pass occupies residues 313-333 (EMIFNIFYMLFNLGLTAYLIG). Over 334–935 (NMTNLVVHGT…WDAEKMKGKS (602 aa)) the chain is Cytoplasmic. An a nucleoside 3',5'-cyclic phosphate-binding site is contributed by 419–538 (LFQGVSNDLI…TIIMNNLIQF (120 aa)). ANK repeat units lie at residues 565–594 (DLPI…DPNE), 598–627 (DGHT…DPNA), 631–660 (EGKV…DLSS), 662–691 (DTGL…DVNR), 695–724 (DGTT…DIDK), and 728–757 (NGWT…ATAS). The interval 826–854 (SQAQRETDHPLSRGGLAATGSPNPSSGSR) is disordered. Residues 845–854 (GSPNPSSGSR) show a composition bias toward polar residues. Residues 859–935 (RVTISCPEKG…WDAEKMKGKS (77 aa)) form the KHA domain.

The protein belongs to the potassium channel family. Plant (TC 1.A.1.4) subfamily. The potassium channel is probably a homo- or heterotetrameric complex of pore-forming subunits. In terms of tissue distribution, highly expressed in the epidermis and endodermis of roots, and at lower level in cells of the vasculature and the cortex. Expressed in xylem parenchyma, phloem and mesophyll cells of leaves.

It is found in the membrane. Functionally, highly selective inward-rectifying potassium channel that mediates potassium uptake by plant roots. The polypeptide is Potassium channel AKT1 (AKT1) (Oryza sativa subsp. indica (Rice)).